The following is a 338-amino-acid chain: Lipoate-protein ligase A (338 aa).

The region spanning 29 to 216 (PATQRVLFLW…AFFAHYGERV (188 aa)) is the BPL/LPL catalytic domain. Residues R71, 76–79 (GAVF), and K134 each bind ATP. K134 contacts (R)-lipoate.

This sequence belongs to the LplA family. Monomer.

The protein resides in the cytoplasm. The catalysed reaction is L-lysyl-[lipoyl-carrier protein] + (R)-lipoate + ATP = N(6)-[(R)-lipoyl]-L-lysyl-[lipoyl-carrier protein] + AMP + diphosphate + H(+). It functions in the pathway protein modification; protein lipoylation via exogenous pathway; protein N(6)-(lipoyl)lysine from lipoate: step 1/2. It participates in protein modification; protein lipoylation via exogenous pathway; protein N(6)-(lipoyl)lysine from lipoate: step 2/2. Functionally, catalyzes both the ATP-dependent activation of exogenously supplied lipoate to lipoyl-AMP and the transfer of the activated lipoyl onto the lipoyl domains of lipoate-dependent enzymes. This is Lipoate-protein ligase A from Salmonella paratyphi B (strain ATCC BAA-1250 / SPB7).